A 141-amino-acid chain; its full sequence is MAKNVVNVVKLQIPAGKATPAPPVGPALGQAGINIMGFTKEFNARTADQAGMIIPVVISVYEDRSFDFVTKTPPAAVLLKKAAGVEKGSGEPNMKKVATVTKDQVKEIAETKMQDLNAADVEAAMRMIEGTARSMGFVVED.

Belongs to the universal ribosomal protein uL11 family. In terms of assembly, part of the ribosomal stalk of the 50S ribosomal subunit. Interacts with L10 and the large rRNA to form the base of the stalk. L10 forms an elongated spine to which L12 dimers bind in a sequential fashion forming a multimeric L10(L12)X complex. In terms of processing, one or more lysine residues are methylated.

Its function is as follows. Forms part of the ribosomal stalk which helps the ribosome interact with GTP-bound translation factors. The chain is Large ribosomal subunit protein uL11 from Ligilactobacillus salivarius (strain UCC118) (Lactobacillus salivarius).